Here is a 200-residue protein sequence, read N- to C-terminus: MKIGVIAIQGAVSEHIDALRRALKERGMSAEVVAVKHKGVIPECGGIVIPGGESTTLCRLLAREGIAEEIKDASARGVPILGTCAGLIVLSKEGDEQVEKTSQELLGIMDTKVNRNAFGRQRDSFEAELEVEILDSPFTGVFIRAPGIVSCGPEVRVLSRLDDLIIAAEQGNVLALAFHPELTEDLRIHQYFLDKIFKNA.

Position 52-54 (52-54 (GES)) interacts with L-glutamine. Catalysis depends on cysteine 84, which acts as the Nucleophile. L-glutamine contacts are provided by residues arginine 115 and 143–144 (IR). Residues histidine 179 and glutamate 181 each act as charge relay system in the active site.

Belongs to the glutaminase PdxT/SNO family. In terms of assembly, in the presence of PdxS, forms a dodecamer of heterodimers. Only shows activity in the heterodimer.

The catalysed reaction is aldehydo-D-ribose 5-phosphate + D-glyceraldehyde 3-phosphate + L-glutamine = pyridoxal 5'-phosphate + L-glutamate + phosphate + 3 H2O + H(+). It carries out the reaction L-glutamine + H2O = L-glutamate + NH4(+). It functions in the pathway cofactor biosynthesis; pyridoxal 5'-phosphate biosynthesis. Catalyzes the hydrolysis of glutamine to glutamate and ammonia as part of the biosynthesis of pyridoxal 5'-phosphate. The resulting ammonia molecule is channeled to the active site of PdxS. This Methanosarcina barkeri (strain Fusaro / DSM 804) protein is Pyridoxal 5'-phosphate synthase subunit PdxT.